Here is a 95-residue protein sequence, read N- to C-terminus: Small ribosomal subunit protein bS6 (95 aa).

Belongs to the bacterial ribosomal protein bS6 family.

In terms of biological role, binds together with bS18 to 16S ribosomal RNA. The polypeptide is Small ribosomal subunit protein bS6 (Thermoanaerobacter pseudethanolicus (strain ATCC 33223 / 39E) (Clostridium thermohydrosulfuricum)).